A 219-amino-acid polypeptide reads, in one-letter code: 3-demethoxyubiquinol 3-hydroxylase (219 aa).

The disordered stretch occupies residues 21-51 (RTLTPGTTQAERTPAHAAPAPDAPEAGTLPS). Low complexity predominate over residues 35-46 (AHAAPAPDAPEA). Residues Glu68, Glu98, His101, Glu150, Glu182, and His185 each contribute to the Fe cation site.

This sequence belongs to the COQ7 family. Fe cation serves as cofactor.

The protein resides in the cell membrane. It catalyses the reaction a 5-methoxy-2-methyl-3-(all-trans-polyprenyl)benzene-1,4-diol + AH2 + O2 = a 3-demethylubiquinol + A + H2O. The protein operates within cofactor biosynthesis; ubiquinone biosynthesis. Catalyzes the hydroxylation of 2-nonaprenyl-3-methyl-6-methoxy-1,4-benzoquinol during ubiquinone biosynthesis. The chain is 3-demethoxyubiquinol 3-hydroxylase from Alcanivorax borkumensis (strain ATCC 700651 / DSM 11573 / NCIMB 13689 / SK2).